The following is a 688-amino-acid chain: Potassium-transporting ATPase ATP-binding subunit (688 aa).

4 helical membrane passes run 37–57 (FLVY…LVGI), 65–85 (ILGI…AEAI), 219–239 (IALQ…TVSL), and 262–282 (VALL…SIGI). Catalysis depends on Asp313, which acts as the 4-aspartylphosphate intermediate. ATP-binding positions include Asp350, Glu354, 383-390 (FTAKTRMS), and Lys401. Positions 524 and 528 each coordinate Mg(2+). 3 consecutive transmembrane segments (helical) span residues 594–614 (FAII…LNIM), 622–642 (AIFS…PLAL), and 668–688 (IIVP…IGIV).

This sequence belongs to the cation transport ATPase (P-type) (TC 3.A.3) family. Type IA subfamily. As to quaternary structure, the system is composed of three essential subunits: KdpA, KdpB and KdpC.

The protein localises to the cell membrane. The catalysed reaction is K(+)(out) + ATP + H2O = K(+)(in) + ADP + phosphate + H(+). Part of the high-affinity ATP-driven potassium transport (or Kdp) system, which catalyzes the hydrolysis of ATP coupled with the electrogenic transport of potassium into the cytoplasm. This subunit is responsible for energy coupling to the transport system and for the release of the potassium ions to the cytoplasm. The polypeptide is Potassium-transporting ATPase ATP-binding subunit (Clostridium botulinum (strain Alaska E43 / Type E3)).